The chain runs to 327 residues: Undecaprenyl-phosphate 4-deoxy-4-formamido-L-arabinose transferase (327 aa).

The Cytoplasmic portion of the chain corresponds to methionine 1–leucine 235. Residues leucine 236–valine 256 traverse the membrane as a helical segment. Topologically, residues leucine 257–glycine 269 are periplasmic. The helical transmembrane segment at valine 270–leucine 290 threads the bilayer. Residues leucine 291–glutamine 327 are Cytoplasmic-facing.

The protein belongs to the glycosyltransferase 2 family.

Its subcellular location is the cell inner membrane. The enzyme catalyses UDP-4-deoxy-4-formamido-beta-L-arabinose + di-trans,octa-cis-undecaprenyl phosphate = 4-deoxy-4-formamido-alpha-L-arabinopyranosyl di-trans,octa-cis-undecaprenyl phosphate + UDP. The protein operates within glycolipid biosynthesis; 4-amino-4-deoxy-alpha-L-arabinose undecaprenyl phosphate biosynthesis; 4-amino-4-deoxy-alpha-L-arabinose undecaprenyl phosphate from UDP-4-deoxy-4-formamido-beta-L-arabinose and undecaprenyl phosphate: step 1/2. Its pathway is bacterial outer membrane biogenesis; lipopolysaccharide biosynthesis. Catalyzes the transfer of 4-deoxy-4-formamido-L-arabinose from UDP to undecaprenyl phosphate. The modified arabinose is attached to lipid A and is required for resistance to polymyxin and cationic antimicrobial peptides. This chain is Undecaprenyl-phosphate 4-deoxy-4-formamido-L-arabinose transferase, found in Salmonella newport (strain SL254).